Consider the following 309-residue polypeptide: Olfactory receptor-like protein OLF4 (309 aa).

The Extracellular segment spans residues 1 to 25 (MELENDTRIPEFLLLGFSEEPKLQP). A glycan (N-linked (GlcNAc...) asparagine) is linked at N5. The helical transmembrane segment at 26–49 (FLFGLFLSMYLVTILGNLLLILAV) threads the bilayer. Topologically, residues 50–57 (SSDSHLHT) are cytoplasmic. Residues 58-79 (PMYFFLANLSFVDICFTCTTIP) form a helical membrane-spanning segment. Topologically, residues 80 to 100 (KMLVNIQTQRKVITYESCIIQ) are extracellular. A helical transmembrane segment spans residues 101-120 (MYFFELFAGIDNFLLTVMAY). The Cytoplasmic segment spans residues 121-139 (DRYMAICYPLHYMVIMNPQ). Residues 140-158 (LCSLLLLVSWIMSALHSLL) traverse the membrane as a helical segment. Over 159–196 (QTLMVLRLSFCTHFQIPHFFCELNQMIQLACSDTFLNN) the chain is Extracellular. A helical membrane pass occupies residues 197-219 (MMLYFAAILLGVAPLVGVLYSYF). Over 220–236 (KIVSSIRGISSAHSKYK) the chain is Cytoplasmic. The chain crosses the membrane as a helical span at residues 237–260 (AFSTCASHLSVVSLFYCTSLGVYL). At 261–272 (SSAAPQSTHTSS) the chain is on the extracellular side. Residues 273-292 (VASVMYTVVTPMLNPFIYSL) traverse the membrane as a helical segment. The Cytoplasmic segment spans residues 293–309 (RNKDIKGALNVFFRGKP).

It belongs to the G-protein coupled receptor 1 family.

It localises to the cell membrane. Functionally, putative odorant or sperm cell receptor. This is Olfactory receptor-like protein OLF4 from Canis lupus familiaris (Dog).